Consider the following 649-residue polypeptide: MISSDAKVKIQNFGRFLSNMVMPNIGAFIAWGFITALFIPTGWVPNETLASLVGPMITYLLPLLIGYTGGKLAGGERGAVVGAITTMGVIVGTDIPMFMGAMIVGPMGGWAIKAFDKKIDGKVRSGFEMLVNNFSAGIIGMLCAIIAFFLIGPFVKVLSGALAAGVNFLVTAHLLPLTSIFVEPAKILFLNNAINHGIFSPLGIQQASETGQSIFFLIEANPGPGLGILLAYMVFGKGTARQTAGGATIIHFFGGIHEIYFPYILMNPRLILAAIAGGMTGVFTLTVFNAGLVSPASPGSIFAVLLMTNKGSILGVVCSIFAAAAVSFTVAALLMKAQTSTEQDGDKDALVKATSIMQEMKAGSKGQAAPTATQSKKIDMANVQSIIVACDAGMGSSAMGASMLRKKIQEVGLPVTVTNMAINSLPAHVDMVITHQDLTDRARQHAPNAEHISLNNFLDSALYNQLVTQLLAAKRQAANDSQLIKPSILAANDDRYEVQQPSVFQLQKENIHLGLNAKNKEEAIRFAGNKLVELGYVHPEYVDAMFEREKLVSTYLGESIAVPHGTVDAKDRVIKTGIVICQYPQGVAFSEDSGDVAKLVIGIAAKNDEHIQVITTITNALDDPNAIDKLTSTKDVSDVLSILATSQAA.

One can recognise a PTS EIIC type-2 domain in the interval 13–342 (FGRFLSNMVM…LLMKAQTSTE (330 aa)). A run of 6 helical transmembrane segments spans residues 25–46 (IGAFIAWGFITALFIPTGWVPN), 51–71 (SLVGPMITYLLPLLIGYTGGK), 135–156 (SAGIIGMLCAIIAFFLIGPFVK), 166–186 (VNFLVTAHLLPLTSIFVEPAK), 274–293 (AIAGGMTGVFTLTVFNAGLV), and 314–335 (LGVVCSIFAAAAVSFTVAALLM). The PTS EIIB type-2 domain maps to 384-475 (QSIIVACDAG…LVTQLLAAKR (92 aa)). Residue Cys390 is the Phosphocysteine intermediate; for EIIB activity of the active site. Residue Cys390 is modified to Phosphocysteine; by EIIA. One can recognise a PTS EIIA type-2 domain in the interval 504–646 (FQLQKENIHL…SDVLSILATS (143 aa)). The Tele-phosphohistidine intermediate; for EIIA activity role is filled by His564. His564 is subject to Phosphohistidine; by HPr.

Homodimer. In terms of processing, an intramolecular phosphotransfer takes places between His-564 and Cys-390.

The protein resides in the cell inner membrane. The enzyme catalyses D-mannitol(out) + N(pros)-phospho-L-histidyl-[protein] = D-mannitol 1-phosphate(in) + L-histidyl-[protein]. Functionally, the phosphoenolpyruvate-dependent sugar phosphotransferase system (sugar PTS), a major carbohydrate active transport system, catalyzes the phosphorylation of incoming sugar substrates concomitantly with their translocation across the cell membrane. This system is involved in D-mannitol transport. The polypeptide is PTS system mannitol-specific EIICBA component (mtlA) (Vibrio cholerae serotype O1 (strain ATCC 39315 / El Tor Inaba N16961)).